Reading from the N-terminus, the 224-residue chain is Phosphoglycolate phosphatase (224 aa).

Asp-11 acts as the Nucleophile in catalysis. Residues Asp-11, Asp-13, and Asp-177 each contribute to the Mg(2+) site.

It belongs to the HAD-like hydrolase superfamily. CbbY/CbbZ/Gph/YieH family. Mg(2+) serves as cofactor.

It catalyses the reaction 2-phosphoglycolate + H2O = glycolate + phosphate. The protein operates within organic acid metabolism; glycolate biosynthesis; glycolate from 2-phosphoglycolate: step 1/1. Specifically catalyzes the dephosphorylation of 2-phosphoglycolate. Is involved in the dissimilation of the intracellular 2-phosphoglycolate formed during the DNA repair of 3'-phosphoglycolate ends, a major class of DNA lesions induced by oxidative stress. This is Phosphoglycolate phosphatase from Haemophilus influenzae (strain ATCC 51907 / DSM 11121 / KW20 / Rd).